The following is a 660-amino-acid chain: ATPase WRNIP1 (660 aa).

A UBZ4-type zinc finger spans residues 17 to 44; that stretch reads QVQCPVCQQMMPAAHINSHLDRCLLLHP. Zn(2+) is bound by residues cysteine 20, cysteine 23, histidine 31, histidine 35, and cysteine 39. A disordered region spans residues 48-191; sequence AEPAAGSHRA…DDPGHWDADA (144 aa). Serine 65 and serine 75 each carry phosphoserine. Polar residues predominate over residues 76-89; sequence ESSALKQPATPTAA. Lysine 81 is covalently cross-linked (Glycyl lysine isopeptide (Lys-Gly) (interchain with G-Cter in ubiquitin)). The residue at position 85 (threonine 85) is a Phosphothreonine. Serine 91 and serine 92 each carry phosphoserine. Residues 92–104 show a composition bias toward acidic residues; the sequence is SEGEGEEGDDGGE. Threonine 116 carries the post-translational modification Phosphothreonine. Low complexity predominate over residues 135-155; that stretch reads ARKGMGKRPAAAAAAGSASPR. Lysine 141 is covalently cross-linked (Glycyl lysine isopeptide (Lys-Gly) (interchain with G-Cter in ubiquitin)). Serine 153 carries the post-translational modification Phosphoserine. Acidic residues predominate over residues 159–182; the sequence is EAEAQEEEEAGVDGDGDADVDGED. Residue lysine 220 forms a Glycyl lysine isopeptide (Lys-Gly) (interchain with G-Cter in ubiquitin) linkage. 265-271 lines the ATP pocket; the sequence is PGCGKTT. Residues lysine 296, lysine 305, lysine 311, lysine 317, and lysine 330 each participate in a glycyl lysine isopeptide (Lys-Gly) (interchain with G-Cter in ubiquitin) cross-link. Residue lysine 477 forms a Glycyl lysine isopeptide (Lys-Gly) (interchain with G-Cter in SUMO2); alternate linkage. Residue lysine 477 forms a Glycyl lysine isopeptide (Lys-Gly) (interchain with G-Cter in ubiquitin); alternate linkage. 2 positions are modified to phosphotyrosine: tyrosine 529 and tyrosine 557. A Glycyl lysine isopeptide (Lys-Gly) (interchain with G-Cter in ubiquitin) cross-link involves residue lysine 622. Residue lysine 628 forms a Glycyl lysine isopeptide (Lys-Gly) (interchain with G-Cter in ubiquitin); alternate linkage. Lysine 628 bears the N6-acetyllysine; alternate mark. A Glycyl lysine isopeptide (Lys-Gly) (interchain with G-Cter in ubiquitin) cross-link involves residue lysine 631.

Belongs to the AAA ATPase family. RarA/MGS1/WRNIP1 subfamily. Forms homooligomers, possibly octamers. Directly interacts with POLD1, POLD2 and POLD4. Interacts with the N-terminal domain of WRN. Interacts (via UBZ4-type zinc finger) with monoubiquitin and polyubiquitin. Interacts with TRIM14 and PPP6C; these interactions positively regulate the RIGI signaling pathway. Post-translationally, sumoylated with SUMO1 and SUMO2/3. In terms of tissue distribution, ubiquitously expressed.

The protein resides in the nucleus. Its subcellular location is the cytoplasm. The enzyme catalyses ATP + H2O = ADP + phosphate + H(+). Functionally, functions as a modulator of initiation or reinitiation events during DNA polymerase delta-mediated DNA synthesis. In the presence of ATP, stimulation of DNA polymerase delta-mediated DNA synthesis is decreased. Also plays a role in the innate immune defense against viruses. Stabilizes the RIGI dsRNA interaction and promotes RIGI 'Lys-63'-linked polyubiquitination. In turn, RIGI transmits the signal through mitochondrial MAVS. This chain is ATPase WRNIP1, found in Mus musculus (Mouse).